A 489-amino-acid chain; its full sequence is Glutamate--tRNA ligase (489 aa).

The 'HIGH' region signature appears at 11–21; sequence PSPTGHLHIGG. Residues cysteine 108, cysteine 110, cysteine 136, and histidine 138 each coordinate Zn(2+). Residues 253–257 carry the 'KMSKS' region motif; it reads KLSKR. Residue lysine 256 coordinates ATP.

The protein belongs to the class-I aminoacyl-tRNA synthetase family. Glutamate--tRNA ligase type 1 subfamily. As to quaternary structure, monomer. Zn(2+) is required as a cofactor.

It localises to the cytoplasm. It catalyses the reaction tRNA(Glu) + L-glutamate + ATP = L-glutamyl-tRNA(Glu) + AMP + diphosphate. In terms of biological role, catalyzes the attachment of glutamate to tRNA(Glu) in a two-step reaction: glutamate is first activated by ATP to form Glu-AMP and then transferred to the acceptor end of tRNA(Glu). The chain is Glutamate--tRNA ligase from Geobacillus thermodenitrificans (strain NG80-2).